Here is a 342-residue protein sequence, read N- to C-terminus: MGEIGGNALDGIHARVRTAPLADQAAIAAVRQRDRLLTKPPGSLGRLEAIVEWLAAWQGKSPPVLESAAAVVFAGNHGVAKHGVSAYPAEVTAQMVANFEAGGAAINQIAKANGLKLSIVPIDLDRPTADIIIADAMSVQECAAAVNLGASVAAADLDLLCIGEMGIGNTTPASAILQALFGGPAHIWVGPGTGVERDALTNKIRAVESAVARVIGTDGTSPLEFLRRLGGREIAALVGAIIEARHRRIPVLIDGFVATAAAAVVHAIEPGAIDHCLIGHLSAEPAHRRAVQALGKTPILELNMRLGEASGAALAAGIVRSALAVHTGMATFAEAGVTDRQT.

E308 serves as the catalytic Proton acceptor.

The protein belongs to the CobT family.

The enzyme catalyses 5,6-dimethylbenzimidazole + nicotinate beta-D-ribonucleotide = alpha-ribazole 5'-phosphate + nicotinate + H(+). It participates in nucleoside biosynthesis; alpha-ribazole biosynthesis; alpha-ribazole from 5,6-dimethylbenzimidazole: step 1/2. Catalyzes the synthesis of alpha-ribazole-5'-phosphate from nicotinate mononucleotide (NAMN) and 5,6-dimethylbenzimidazole (DMB). In Methylorubrum extorquens (strain CM4 / NCIMB 13688) (Methylobacterium extorquens), this protein is Nicotinate-nucleotide--dimethylbenzimidazole phosphoribosyltransferase (cobT).